The chain runs to 125 residues: Ribonuclease P protein component (125 aa).

It belongs to the RnpA family. In terms of assembly, consists of a catalytic RNA component (M1 or rnpB) and a protein subunit.

It carries out the reaction Endonucleolytic cleavage of RNA, removing 5'-extranucleotides from tRNA precursor.. RNaseP catalyzes the removal of the 5'-leader sequence from pre-tRNA to produce the mature 5'-terminus. It can also cleave other RNA substrates such as 4.5S RNA. The protein component plays an auxiliary but essential role in vivo by binding to the 5'-leader sequence and broadening the substrate specificity of the ribozyme. The chain is Ribonuclease P protein component from Ruegeria pomeroyi (strain ATCC 700808 / DSM 15171 / DSS-3) (Silicibacter pomeroyi).